The primary structure comprises 252 residues: Small ribosomal subunit protein uS3 (252 aa).

Positions 39 to 109 constitute a KH type-2 domain; that stretch reads IRNYVQTRLK…EVKIDVVEVV (71 aa). Basic and acidic residues predominate over residues 221–241; the sequence is EMKRIKERRSDSGPRSRNDRS. Residues 221–252 are disordered; it reads EMKRIKERRSDSGPRSRNDRSQKRRRRPNDRG. Residues 242–252 are compositionally biased toward basic residues; that stretch reads QKRRRRPNDRG.

This sequence belongs to the universal ribosomal protein uS3 family. In terms of assembly, part of the 30S ribosomal subunit. Forms a tight complex with proteins S10 and S14.

Binds the lower part of the 30S subunit head. Binds mRNA in the 70S ribosome, positioning it for translation. The sequence is that of Small ribosomal subunit protein uS3 from Chlorobium luteolum (strain DSM 273 / BCRC 81028 / 2530) (Pelodictyon luteolum).